We begin with the raw amino-acid sequence, 153 residues long: uncharacterized protein (153 aa).

Transmembrane regions (helical) follow at residues 16-36 (ILACLLLIFLMATIFLLILEI) and 97-117 (ALTTTLSIILLVCIIMACIIC).

The protein localises to the membrane. This is an uncharacterized protein from Human herpesvirus 6A (strain Uganda-1102) (HHV-6 variant A).